A 465-amino-acid polypeptide reads, in one-letter code: ATP synthase subunit beta (465 aa).

An ATP-binding site is contributed by Gly-153–Thr-160.

This sequence belongs to the ATPase alpha/beta chains family. In terms of assembly, F-type ATPases have 2 components, CF(1) - the catalytic core - and CF(0) - the membrane proton channel. CF(1) has five subunits: alpha(3), beta(3), gamma(1), delta(1), epsilon(1). CF(0) has three main subunits: a(1), b(2) and c(9-12). The alpha and beta chains form an alternating ring which encloses part of the gamma chain. CF(1) is attached to CF(0) by a central stalk formed by the gamma and epsilon chains, while a peripheral stalk is formed by the delta and b chains.

The protein resides in the cell membrane. The enzyme catalyses ATP + H2O + 4 H(+)(in) = ADP + phosphate + 5 H(+)(out). Its function is as follows. Produces ATP from ADP in the presence of a proton gradient across the membrane. The catalytic sites are hosted primarily by the beta subunits. This Clostridium perfringens (strain SM101 / Type A) protein is ATP synthase subunit beta.